Here is a 226-residue protein sequence, read N- to C-terminus: Ribose-5-phosphate isomerase A (226 aa).

Substrate is bound by residues 32 to 35 (TGST), 85 to 88 (DGAD), and 98 to 101 (KGGG). Catalysis depends on E107, which acts as the Proton acceptor. K125 is a binding site for substrate.

Belongs to the ribose 5-phosphate isomerase family. As to quaternary structure, homodimer.

It catalyses the reaction aldehydo-D-ribose 5-phosphate = D-ribulose 5-phosphate. Its pathway is carbohydrate degradation; pentose phosphate pathway; D-ribose 5-phosphate from D-ribulose 5-phosphate (non-oxidative stage): step 1/1. Functionally, catalyzes the reversible conversion of ribose-5-phosphate to ribulose 5-phosphate. The polypeptide is Ribose-5-phosphate isomerase A (Saccharophagus degradans (strain 2-40 / ATCC 43961 / DSM 17024)).